The primary structure comprises 375 residues: E3 ubiquitin-protein ligase RHF2A (375 aa).

The RING-type; atypical zinc finger occupies 33–74; that stretch reads CSICLESFCESDPSTLTSCKHEYHLQCILEWCQRSSQCPMCW. Positions 146-159 are enriched in basic residues; the sequence is RARHGVRREGHRSR. Disordered stretches follow at residues 146 to 165, 172 to 262, and 318 to 375; these read RARH…SQGH, SSQP…SESL, and ERLE…SGSS. Residues 178–188 are compositionally biased toward pro residues; it reads SSPPPHPPMPS. Composition is skewed to polar residues over residues 211–245 and 327–336; these read SHQS…SSPS and RPSTASVSDV. Over residues 337–365 the composition is skewed to basic and acidic residues; that stretch reads SENHTPETNNEHNRAAAGDEHSVNERGVK.

The enzyme catalyses S-ubiquitinyl-[E2 ubiquitin-conjugating enzyme]-L-cysteine + [acceptor protein]-L-lysine = [E2 ubiquitin-conjugating enzyme]-L-cysteine + N(6)-ubiquitinyl-[acceptor protein]-L-lysine.. It participates in protein modification; protein ubiquitination. In terms of biological role, E3 ubiquitin-protein ligase involved in the positive regulation of the gametogenesis progression. Required for the degradation of KRP6, a cyclin-dependent kinase inhibitor which accumulates during meiosis and blocks the progression of subsequent mitoses during gametophytes development. Functions in association with RHF1A. This is E3 ubiquitin-protein ligase RHF2A from Arabidopsis thaliana (Mouse-ear cress).